The following is a 137-amino-acid chain: ATP synthase epsilon chain (137 aa).

The protein belongs to the ATPase epsilon chain family. F-type ATPases have 2 components, CF(1) - the catalytic core - and CF(0) - the membrane proton channel. CF(1) has five subunits: alpha(3), beta(3), gamma(1), delta(1), epsilon(1). CF(0) has three main subunits: a, b and c.

Its subcellular location is the cell membrane. Its function is as follows. Produces ATP from ADP in the presence of a proton gradient across the membrane. The sequence is that of ATP synthase epsilon chain from Caldicellulosiruptor saccharolyticus (strain ATCC 43494 / DSM 8903 / Tp8T 6331).